Reading from the N-terminus, the 260-residue chain is Taurine import ATP-binding protein TauB (260 aa).

The ABC transporter domain occupies 6-235 (AQQVSVVYAS…RYAHGEPVRS (230 aa)). Residue 40–47 (GASGCGKS) coordinates ATP.

It belongs to the ABC transporter superfamily. Taurine importer (TC 3.A.1.17.1) family. The complex is composed of two ATP-binding proteins (TauB), two transmembrane proteins (TauC) and a solute-binding protein (TauA).

The protein resides in the cell inner membrane. The enzyme catalyses taurine(out) + ATP + H2O = taurine(in) + ADP + phosphate + H(+). Its function is as follows. Part of the ABC transporter complex TauABC involved in taurine import. Responsible for energy coupling to the transport system. The chain is Taurine import ATP-binding protein TauB from Burkholderia pseudomallei (strain K96243).